We begin with the raw amino-acid sequence, 60 residues long: Large ribosomal subunit protein uL30 (60 aa).

It belongs to the universal ribosomal protein uL30 family. In terms of assembly, part of the 50S ribosomal subunit.

The sequence is that of Large ribosomal subunit protein uL30 from Desulfitobacterium hafniense (strain DSM 10664 / DCB-2).